A 111-amino-acid chain; its full sequence is Small ribosomal subunit protein bS16 (111 aa).

It belongs to the bacterial ribosomal protein bS16 family.

This chain is Small ribosomal subunit protein bS16, found in Rickettsia felis (strain ATCC VR-1525 / URRWXCal2) (Rickettsia azadi).